Reading from the N-terminus, the 157-residue chain is Thioredoxin 2 (157 aa).

The N-terminal stretch at 1–23 is a signal peptide; that stretch reads MKKYIFFFLFSFINFFFVYDVTC. A Thioredoxin domain is found at 46–157; sequence LRMFKKVPRL…DLIALIKKHL (112 aa). Active-site nucleophile residues include C82 and C85. Cysteines 82 and 85 form a disulfide.

It belongs to the thioredoxin family. Monomer. Component of the Plasmodium translocon of exported proteins (PTEX) complex composed of HSP101, EXP2, PTEX150, PTEX88 and TRX2. In terms of processing, the disulfide bond between Cys-82 and Cys-85 acts as a redox-active center and is reduced by thioredoxin reductase TRXR.

The protein localises to the parasitophorous vacuole membrane. In terms of biological role, participates in various redox reactions through the reversible oxidation of its active center dithiol to a disulfide and catalyzes dithiol-disulfide exchange reactions. As part of the translocon PTEX complex, plays a role in the export of parasite proteins into the host erythrocyte. The translocon PTEX complex is a multi-protein machinery resident in the parasite parasitophorous vacuolar membrane, responsible for protein secretion into host cells. May contribute to the unfolding of proteins containing the PEXEL localization motif before their passage through the translocon or regulate the PTEX complex function. This chain is Thioredoxin 2, found in Plasmodium falciparum (isolate 3D7).